Reading from the N-terminus, the 207-residue chain is Putative acetyltransferase C18B11.09c (207 aa).

This sequence belongs to the transferase hexapeptide repeat family.

The polypeptide is Putative acetyltransferase C18B11.09c (Schizosaccharomyces pombe (strain 972 / ATCC 24843) (Fission yeast)).